The following is a 108-amino-acid chain: PTS system cellobiose-specific EIIB component (108 aa).

The PTS EIIB type-3 domain occupies 3–108 (DKVIALACAA…VLAAAENLMN (106 aa)). The active-site Phosphocysteine intermediate is the cysteine 10. Position 10 is a phosphocysteine; by EIIA (cysteine 10).

It catalyses the reaction D-cellobiose(out) + N(pros)-phospho-L-histidyl-[protein] = 6-phospho-beta-D-glucosyl-(1-&gt;4)-D-glucose(in) + L-histidyl-[protein]. In terms of biological role, the phosphoenolpyruvate-dependent sugar phosphotransferase system (sugar PTS), a major carbohydrate active transport system, catalyzes the phosphorylation of incoming sugar substrates concomitantly with their translocation across the cell membrane. Involved in cellobiose transport with PtcA and CelB. This system can also transport lactose. This chain is PTS system cellobiose-specific EIIB component, found in Lactococcus lactis subsp. lactis (strain IL1403) (Streptococcus lactis).